We begin with the raw amino-acid sequence, 372 residues long: MNPILSSLFALSLLSSLSPSTHAHQCHFPAIFNFGDSNSDTGGLSAAFGQAGPPHGSSFFGSPAGRYCDGRLVIDFIAESLGLPYLSAFLDSVGSNFSHGANFATAGSPIRALNSTLRQSGFSPFSLDVQFVQFYNFHNRSQTVRSRGGVYKTMLPESDSFSKALYTFDIGQNDLTAGYFANKTVEQVETEVPEIISQFMNAIKNIYGQGGRYFWIHNTGPIGCLAYVIERFPNKASDFDSHGCVSPLNHLAQQFNHALKQAVIELRSSLSEAAITYVDVYSLKHELFVHAQGHGFKGSLVSCCGHGGKYNYNKGIGCGMKKIVKGKEVYIGKPCDEPDKAVVWDGVHFTQAANKFIFDKIAPGLSKACKRQ.

Positions 1 to 23 (MNPILSSLFALSLLSSLSPSTHA) are cleaved as a signal peptide. The active-site Nucleophile is Ser-37. 4 N-linked (GlcNAc...) asparagine glycosylation sites follow: Asn-96, Asn-114, Asn-139, and Asn-182. Active-site residues include Asp-345 and His-348.

Belongs to the 'GDSL' lipolytic enzyme family. High expression in younger leaves and in the apical region of the inflorescence stem.

The protein localises to the secreted. It localises to the extracellular space. The protein resides in the apoplast. The catalysed reaction is an alpha-L-fucoside + H2O = L-fucose + an alcohol. Its function is as follows. Hydrolyzes alpha-1,2-linked fucose. Also active on fucosylated xyloglucan oligosaccharides. The chain is Alpha-L-fucosidase 3 (FXG1) from Arabidopsis thaliana (Mouse-ear cress).